The primary structure comprises 121 residues: Large ribosomal subunit protein uL22 (121 aa).

Belongs to the universal ribosomal protein uL22 family. Part of the 50S ribosomal subunit.

Its function is as follows. This protein binds specifically to 23S rRNA; its binding is stimulated by other ribosomal proteins, e.g. L4, L17, and L20. It is important during the early stages of 50S assembly. It makes multiple contacts with different domains of the 23S rRNA in the assembled 50S subunit and ribosome. In terms of biological role, the globular domain of the protein is located near the polypeptide exit tunnel on the outside of the subunit, while an extended beta-hairpin is found that lines the wall of the exit tunnel in the center of the 70S ribosome. The sequence is that of Large ribosomal subunit protein uL22 from Parasynechococcus marenigrum (strain WH8102).